The sequence spans 456 residues: Phosphomethylpyrimidine synthase (456 aa).

Substrate contacts are provided by residues asparagine 80, methionine 109, tyrosine 139, histidine 175, 195 to 197 (SRG), 236 to 239 (DSLR), and glutamate 275. A Zn(2+)-binding site is contributed by histidine 279. Tyrosine 302 serves as a coordination point for substrate. Histidine 343 provides a ligand contact to Zn(2+). 3 residues coordinate [4Fe-4S] cluster: cysteine 423, cysteine 426, and cysteine 431.

This sequence belongs to the ThiC family. Requires [4Fe-4S] cluster as cofactor.

It catalyses the reaction 5-amino-1-(5-phospho-beta-D-ribosyl)imidazole + S-adenosyl-L-methionine = 4-amino-2-methyl-5-(phosphooxymethyl)pyrimidine + CO + 5'-deoxyadenosine + formate + L-methionine + 3 H(+). It functions in the pathway cofactor biosynthesis; thiamine diphosphate biosynthesis. Catalyzes the synthesis of the hydroxymethylpyrimidine phosphate (HMP-P) moiety of thiamine from aminoimidazole ribotide (AIR) in a radical S-adenosyl-L-methionine (SAM)-dependent reaction. This chain is Phosphomethylpyrimidine synthase, found in Prochlorococcus marinus (strain MIT 9301).